The sequence spans 920 residues: Isoleucine--tRNA ligase (920 aa).

The short motif at 57–67 (PYANGDIHLGH) is the 'HIGH' region element. Glutamate 560 provides a ligand contact to L-isoleucyl-5'-AMP. The short motif at 601 to 605 (KMSKS) is the 'KMSKS' region element. Lysine 604 serves as a coordination point for ATP. Zn(2+) contacts are provided by cysteine 890, cysteine 893, cysteine 910, and cysteine 913.

The protein belongs to the class-I aminoacyl-tRNA synthetase family. IleS type 1 subfamily. In terms of assembly, monomer. Requires Zn(2+) as cofactor.

It is found in the cytoplasm. It carries out the reaction tRNA(Ile) + L-isoleucine + ATP = L-isoleucyl-tRNA(Ile) + AMP + diphosphate. Its function is as follows. Catalyzes the attachment of isoleucine to tRNA(Ile). As IleRS can inadvertently accommodate and process structurally similar amino acids such as valine, to avoid such errors it has two additional distinct tRNA(Ile)-dependent editing activities. One activity is designated as 'pretransfer' editing and involves the hydrolysis of activated Val-AMP. The other activity is designated 'posttransfer' editing and involves deacylation of mischarged Val-tRNA(Ile). The chain is Isoleucine--tRNA ligase from Caldicellulosiruptor bescii (strain ATCC BAA-1888 / DSM 6725 / KCTC 15123 / Z-1320) (Anaerocellum thermophilum).